A 473-amino-acid chain; its full sequence is Cysteine--tRNA ligase (473 aa).

C30 serves as a coordination point for Zn(2+). The 'HIGH' region motif lies at 32-42; that stretch reads MTVYDYCHIGH. Residues C213, H238, and E242 each coordinate Zn(2+). The 'KMSKS' region motif lies at 270 to 274; the sequence is KMSKS. K273 is a binding site for ATP.

Belongs to the class-I aminoacyl-tRNA synthetase family. As to quaternary structure, monomer. It depends on Zn(2+) as a cofactor.

Its subcellular location is the cytoplasm. It catalyses the reaction tRNA(Cys) + L-cysteine + ATP = L-cysteinyl-tRNA(Cys) + AMP + diphosphate. In Acinetobacter baumannii (strain ACICU), this protein is Cysteine--tRNA ligase.